A 144-amino-acid polypeptide reads, in one-letter code: Large ribosomal subunit protein uL11 (144 aa).

Belongs to the universal ribosomal protein uL11 family. In terms of assembly, part of the ribosomal stalk of the 50S ribosomal subunit. Interacts with L10 and the large rRNA to form the base of the stalk. L10 forms an elongated spine to which L12 dimers bind in a sequential fashion forming a multimeric L10(L12)X complex. In terms of processing, one or more lysine residues are methylated.

In terms of biological role, forms part of the ribosomal stalk which helps the ribosome interact with GTP-bound translation factors. The chain is Large ribosomal subunit protein uL11 from Streptomyces sp. (strain FRI-5).